Consider the following 433-residue polypeptide: Probable dipeptidase (433 aa).

C20 is a catalytic residue.

The protein belongs to the peptidase C69 family.

It carries out the reaction an L-aminoacyl-L-amino acid + H2O = 2 an L-alpha-amino acid. This is Probable dipeptidase (pipD) from Salmonella dublin.